Reading from the N-terminus, the 430-residue chain is Sorting nexin-30 (430 aa).

Over residues 1–18 (MSNGGTPRSLPSSGQKSI) the composition is skewed to polar residues. Residues 1–66 (MSNGGTPRSL…SSPASSSSLL (66 aa)) form a disordered region. Over residues 57–66 (SSPASSSSLL) the composition is skewed to low complexity. The PX domain occupies 80 to 201 (RDLFVTVDDP…AFLSAKDLNK (122 aa)). A 1,2-diacyl-sn-glycero-3-phospho-(1D-myo-inositol-3-phosphate) is bound by residues Arg123, Gln125, Lys153, and Arg167. The BAR domain occupies 223 to 428 (KLRGRPVEFA…LQDKQDAKGE (206 aa)).

The protein belongs to the sorting nexin family.

It localises to the early endosome membrane. Its function is as follows. Involved in the regulation of endocytosis and in several stages of intracellular trafficking. Together with snx4, involved in autophagosome assembly. This Danio rerio (Zebrafish) protein is Sorting nexin-30 (snx30).